A 219-amino-acid chain; its full sequence is Large ribosomal subunit protein bL25 (219 aa).

Residues 176-219 (VTVVPPTDEPSEEEVEAMEGESATEEPEVVDEDKEDDEEENKED) form a disordered region. Acidic residues predominate over residues 184-219 (EPSEEEVEAMEGESATEEPEVVDEDKEDDEEENKED).

Belongs to the bacterial ribosomal protein bL25 family. CTC subfamily. Part of the 50S ribosomal subunit; part of the 5S rRNA/L5/L18/L25 subcomplex. Contacts the 5S rRNA. Binds to the 5S rRNA independently of L5 and L18.

Its function is as follows. This is one of the proteins that binds to the 5S RNA in the ribosome where it forms part of the central protuberance. The protein is Large ribosomal subunit protein bL25 of Staphylococcus epidermidis (strain ATCC 12228 / FDA PCI 1200).